A 62-amino-acid chain; its full sequence is uncharacterized protein (62 aa).

The interval 38 to 62 is disordered; the sequence is VKSESDTADSKRSAEAKADEAPAKM.

This is an uncharacterized protein from Schizosaccharomyces pombe (strain 972 / ATCC 24843) (Fission yeast).